Consider the following 849-residue polypeptide: Protein lap1 (849 aa).

LRR repeat units follow at residues V18–E39, T41–C62, G64–L85, Q87–C108, H110–L131, S133–V155, N156–L177, N179–L200, S202–R224, D225–W246, N248–L269, S271–L292, Q294–L315, S317–C338, Q340–S362, K363–L384, and N386–D407. The tract at residues N716–K752 is disordered. Acidic residues predominate over residues N725–D735. A compositionally biased stretch (polar residues) spans T736 to K752. One can recognise a PDZ domain in the interval V770–K849.

The protein belongs to the LAP (LRR and PDZ) protein family.

May have a role in assembling adherens junctions. In Drosophila melanogaster (Fruit fly), this protein is Protein lap1.